The primary structure comprises 464 residues: Septin homolog spn5 (464 aa).

Positions 28 to 91 (QVDESSAKRS…VPNSNGKSIP (64 aa)) are disordered. Composition is skewed to basic and acidic residues over residues 41 to 54 (ESRK…KEQI) and 69 to 81 (TAKD…KQDE). The Septin-type G domain maps to 115 to 370 (NGIDINLIVV…DTFRTEKLVA (256 aa)). Residues 125–132 (GESSLGKT) are G1 motif. Residues 125-132 (GESSLGKT), Thr-151, Gly-177, 257-265 (KADTMTSDE), Gly-304, and Arg-319 each bind GTP. A G3 motif region spans residues 174-177 (DTPG). A G4 motif region spans residues 256–259 (GKAD). The stretch at 396-453 (LVEEALTKVMKEKYREKENNLELLETNLKTHHKDYKHALKKRITALEEEKNRLIKEIG) forms a coiled coil.

The protein belongs to the TRAFAC class TrmE-Era-EngA-EngB-Septin-like GTPase superfamily. Septin GTPase family. Component of the sporulation-specific septin complex composed of at least spn2, spn5, spn6 and spn7.

It is found in the nucleus. The protein localises to the forespore membrane. In terms of biological role, septin-like protein involved in the correct orientation of forespore membrane extension during sporulation. The chain is Septin homolog spn5 (spn5) from Schizosaccharomyces pombe (strain 972 / ATCC 24843) (Fission yeast).